The primary structure comprises 252 residues: tRNA pseudouridine synthase A (252 aa).

D52 functions as the Nucleophile in the catalytic mechanism. A substrate-binding site is contributed by Y112.

Belongs to the tRNA pseudouridine synthase TruA family. In terms of assembly, homodimer.

The catalysed reaction is uridine(38/39/40) in tRNA = pseudouridine(38/39/40) in tRNA. Functionally, formation of pseudouridine at positions 38, 39 and 40 in the anticodon stem and loop of transfer RNAs. In Porphyromonas gingivalis (strain ATCC 33277 / DSM 20709 / CIP 103683 / JCM 12257 / NCTC 11834 / 2561), this protein is tRNA pseudouridine synthase A.